The following is a 757-amino-acid chain: Neutral ceramidase 2 (757 aa).

An N-terminal signal peptide occupies residues 1 to 25 (MAVSLPLFQFILFLLLLLLSRTVYA). Residue Asn-311 is glycosylated (N-linked (GlcNAc...) asparagine). Ser-330 functions as the Nucleophile in the catalytic mechanism. N-linked (GlcNAc...) asparagine glycans are attached at residues Asn-348 and Asn-657.

It belongs to the neutral ceramidase family.

It is found in the secreted. The protein localises to the endoplasmic reticulum. The protein resides in the golgi apparatus. It carries out the reaction an N-acylsphing-4-enine + H2O = sphing-4-enine + a fatty acid. Hydrolyzes the sphingolipid ceramide into sphingosine and free fatty acid. This chain is Neutral ceramidase 2, found in Arabidopsis thaliana (Mouse-ear cress).